Reading from the N-terminus, the 399-residue chain is Elongation factor Tu (399 aa).

The tr-type G domain maps to 10–204 (KDHVNIGTIG…AVDDYIDTPE (195 aa)). A G1 region spans residues 19–26 (GHVDHGKT). Residue 19-26 (GHVDHGKT) coordinates GTP. Threonine 26 is a Mg(2+) binding site. Residues 60–64 (GITIN) form a G2 region. Positions 81–84 (DCPG) are G3. GTP is bound by residues 81–85 (DCPGH) and 136–139 (NKKD). The G4 stretch occupies residues 136 to 139 (NKKD). Residues 174–176 (SAL) form a G5 region.

It belongs to the TRAFAC class translation factor GTPase superfamily. Classic translation factor GTPase family. EF-Tu/EF-1A subfamily. As to quaternary structure, monomer.

It localises to the cytoplasm. It catalyses the reaction GTP + H2O = GDP + phosphate + H(+). In terms of biological role, GTP hydrolase that promotes the GTP-dependent binding of aminoacyl-tRNA to the A-site of ribosomes during protein biosynthesis. The protein is Elongation factor Tu of Synechocystis sp. (strain ATCC 27184 / PCC 6803 / Kazusa).